A 227-amino-acid chain; its full sequence is 7-cyano-7-deazaguanine synthase (227 aa).

ATP is bound at residue 7 to 17; the sequence is LSGGMDSLVTT. Zn(2+) is bound by residues cysteine 187, cysteine 195, cysteine 198, and cysteine 201.

This sequence belongs to the QueC family. It depends on Zn(2+) as a cofactor.

It carries out the reaction 7-carboxy-7-deazaguanine + NH4(+) + ATP = 7-cyano-7-deazaguanine + ADP + phosphate + H2O + H(+). Its pathway is purine metabolism; 7-cyano-7-deazaguanine biosynthesis. Functionally, catalyzes the ATP-dependent conversion of 7-carboxy-7-deazaguanine (CDG) to 7-cyano-7-deazaguanine (preQ(0)). This Chlorobium phaeovibrioides (strain DSM 265 / 1930) (Prosthecochloris vibrioformis (strain DSM 265)) protein is 7-cyano-7-deazaguanine synthase.